A 168-amino-acid polypeptide reads, in one-letter code: Large ribosomal subunit protein uL11 (168 aa).

Belongs to the universal ribosomal protein uL11 family. In terms of assembly, part of the ribosomal stalk of the 50S ribosomal subunit. Interacts with L10 and the large rRNA to form the base of the stalk. L10 forms an elongated spine to which L12 dimers bind in a sequential fashion forming a multimeric L10(L12)X complex.

In terms of biological role, forms part of the ribosomal stalk which helps the ribosome interact with GTP-bound translation factors. This Metallosphaera sedula (strain ATCC 51363 / DSM 5348 / JCM 9185 / NBRC 15509 / TH2) protein is Large ribosomal subunit protein uL11.